We begin with the raw amino-acid sequence, 323 residues long: Glyoxylate/hydroxypyruvate reductase B (323 aa).

Residues Arg-237 and Glu-266 contribute to the active site. His-285 functions as the Proton donor in the catalytic mechanism.

The protein belongs to the D-isomer specific 2-hydroxyacid dehydrogenase family. GhrB subfamily. As to quaternary structure, homodimer.

The protein localises to the cytoplasm. It catalyses the reaction glycolate + NADP(+) = glyoxylate + NADPH + H(+). The enzyme catalyses (R)-glycerate + NAD(+) = 3-hydroxypyruvate + NADH + H(+). The catalysed reaction is (R)-glycerate + NADP(+) = 3-hydroxypyruvate + NADPH + H(+). Its function is as follows. Catalyzes the NADPH-dependent reduction of glyoxylate and hydroxypyruvate into glycolate and glycerate, respectively. The chain is Glyoxylate/hydroxypyruvate reductase B from Klebsiella pneumoniae (strain 342).